Consider the following 248-residue polypeptide: MLYLHDVWVNWFEGEENGYNVCHFYEWRKDDTIELLDQVPLLKVDSTLYHYIENELLELPQKLLEDVHHKAYIRKNHERLQQEYCFVVTDGKGIIAIDTIGYNVPIRKSRLIPRQEQMVYEMVENVQAEKYEFQVEEMEKEHHILSPSPFVMNGLTRKERQLKQLLFMALDQLHTTKNTAEIRYWFTEWDPSAYGMVQHMEFEDIWAKLYDEAKTGWSEKHEQLCERLVKGQPFFEKLWEMENEQKVN.

Belongs to the UPF0736 family.

The chain is UPF0736 protein BT9727_1080 from Bacillus thuringiensis subsp. konkukian (strain 97-27).